The sequence spans 313 residues: Porphobilinogen deaminase (313 aa).

Cys242 bears the S-(dipyrrolylmethanemethyl)cysteine mark.

This sequence belongs to the HMBS family. As to quaternary structure, monomer. The cofactor is dipyrromethane.

It catalyses the reaction 4 porphobilinogen + H2O = hydroxymethylbilane + 4 NH4(+). The protein operates within porphyrin-containing compound metabolism; protoporphyrin-IX biosynthesis; coproporphyrinogen-III from 5-aminolevulinate: step 2/4. In terms of biological role, tetrapolymerization of the monopyrrole PBG into the hydroxymethylbilane pre-uroporphyrinogen in several discrete steps. This Klebsiella pneumoniae (strain 342) protein is Porphobilinogen deaminase.